A 312-amino-acid chain; its full sequence is Methionyl-tRNA formyltransferase (312 aa).

109 to 112 (SLLP) lines the (6S)-5,6,7,8-tetrahydrofolate pocket.

This sequence belongs to the Fmt family.

It carries out the reaction L-methionyl-tRNA(fMet) + (6R)-10-formyltetrahydrofolate = N-formyl-L-methionyl-tRNA(fMet) + (6S)-5,6,7,8-tetrahydrofolate + H(+). Attaches a formyl group to the free amino group of methionyl-tRNA(fMet). The formyl group appears to play a dual role in the initiator identity of N-formylmethionyl-tRNA by promoting its recognition by IF2 and preventing the misappropriation of this tRNA by the elongation apparatus. In Anaeromyxobacter sp. (strain K), this protein is Methionyl-tRNA formyltransferase.